A 258-amino-acid chain; its full sequence is Protein SAWADEE HOMEODOMAIN HOMOLOG 1 (258 aa).

An SAWADEE domain region spans residues 138–244 (AWYDVSSFLT…LVRYELDNTE (107 aa)). Zn(2+) is bound by residues C191, H225, C230, and C232.

As to quaternary structure, associates with the RNA polymerase IV (Pol IV) complex. Interacts with NRPD1, NRPD2, NRPD3, NRPD3B, CLSY1 and CLSY2.

The protein resides in the nucleus. In terms of biological role, involved in RNA-directed DNA methylation (RdDM). Required for the silencing of some endogenous RdDM targets and accumulation of 24-nt siRNAs, but not for the production of Pol V-dependent transcripts. Functions in transcriptional silencing through both DNA methylation-dependent and -independent pathways. Required for both maintenance and de-novo DNA methylation. Plays a role in the recruitment of Pol IV to genomic regions associated with K9 methylated histone H3 that are targets for RdDM. In Arabidopsis thaliana (Mouse-ear cress), this protein is Protein SAWADEE HOMEODOMAIN HOMOLOG 1 (SHH1).